The primary structure comprises 128 residues: Con-Ins F1 (128 aa).

The N-terminal stretch at Met1 to Gly24 is a signal peptide. 4 disulfide bridges follow: Cys29-Cys104, Cys41-Cys107, Cys53-Cys120, and Cys106-Cys111. A propeptide spans Leu59–Arg89 (c peptide). 4-carboxyglutamate; partial is present on Glu115. Residue Ser127 is modified to Serine amide.

The protein belongs to the insulin family. Heterodimer of A and B chains; disulfide-linked. As to expression, expressed by the venom gland.

It localises to the secreted. Functionally, this venom insulin facilitates prey capture by rapidly inducing hypoglycemic shock. Intraperitoneal injection of this peptide into zebrafish lowers blood glucose with the same potency than human insulin. In vivo, when applied to water, this peptide reduces overall locomotor activity of zebrafish larvae, observed as a significant decrease in the percentage of time spent swimming and movement frequency. The protein is Con-Ins F1 of Conus floridulus (Cone snail).